Reading from the N-terminus, the 518-residue chain is DNA-(apurinic or apyrimidinic site) endonuclease 2 (518 aa).

Residues asparagine 8 and glutamate 48 each coordinate Mg(2+). Residue tyrosine 156 is part of the active site. Mg(2+) contacts are provided by aspartate 197, asparagine 199, aspartate 303, and histidine 304. The active-site Proton donor/acceptor is aspartate 197. The Proton acceptor role is filled by histidine 304. Residues 355–405 (STLQHNNQTRVQTCQNKAQVRSTRPQPSQVGSSRGQKNLKSYFQPSPSCPQ) show a composition bias toward polar residues. The disordered stretch occupies residues 355–407 (STLQHNNQTRVQTCQNKAQVRSTRPQPSQVGSSRGQKNLKSYFQPSPSCPQAS). Lysine 371 participates in a covalent cross-link: Glycyl lysine isopeptide (Lys-Gly) (interchain with G-Cter in ubiquitin). The required for the interaction and colocalization with PCNA in nuclear foci in presence of oxidative-induced DNA damaging agents stretch occupies residues 390–397 (QKNLKSYF). Zn(2+)-binding residues include cysteine 469, histidine 472, cysteine 495, and cysteine 509. A GRF-type zinc finger spans residues 469-518 (CGGHREPCVMRTVKKPGPNLGRRFYMCARPRGPPTDPSSRCNFFLWSRPS).

It belongs to the DNA repair enzymes AP/ExoA family. Interacts with PCNA; this interaction is triggered by reactive oxygen species and increased by misincorporation of uracil in nuclear DNA. The cofactor is Mg(2+). Requires Mn(2+) as cofactor. Post-translationally, ubiquitinated by the CUL9-RBX1 complex. Ubiquitinated by MKRN3 at Lys-371 leading to proteasomal degradation. As to expression, highly expressed in brain and kidney. Weakly expressed in the fetal brain.

Its subcellular location is the nucleus. It is found in the cytoplasm. It localises to the mitochondrion. It carries out the reaction Exonucleolytic cleavage in the 3'- to 5'-direction to yield nucleoside 5'-phosphates.. Its activity is regulated as follows. 3'-5' exonuclease activity is activated by sodium and manganese. 3'-5' exonuclease and 3'-phosphodiesterase activities are stimulated in presence of PCNA. Functionally, functions as a weak apurinic/apyrimidinic (AP) endodeoxyribonuclease in the DNA base excision repair (BER) pathway of DNA lesions induced by oxidative and alkylating agents. Initiates repair of AP sites in DNA by catalyzing hydrolytic incision of the phosphodiester backbone immediately adjacent to the damage, generating a single-strand break with 5'-deoxyribose phosphate and 3'-hydroxyl ends. Also displays double-stranded DNA 3'-5' exonuclease, 3'-phosphodiesterase activities. Shows robust 3'-5' exonuclease activity on 3'-recessed heteroduplex DNA and is able to remove mismatched nucleotides preferentially. Also exhibits 3'-5' exonuclease activity on a single nucleotide gap containing heteroduplex DNA and on blunt-ended substrates. Shows fairly strong 3'-phosphodiesterase activity involved in the removal of 3'-damaged termini formed in DNA by oxidative agents. In the nucleus functions in the PCNA-dependent BER pathway. Plays a role in reversing blocked 3' DNA ends, problematic lesions that preclude DNA synthesis. Required for somatic hypermutation (SHM) and DNA cleavage step of class switch recombination (CSR) of immunoglobulin genes. Required for proper cell cycle progression during proliferation of peripheral lymphocytes. The chain is DNA-(apurinic or apyrimidinic site) endonuclease 2 (APEX2) from Homo sapiens (Human).